The chain runs to 385 residues: Rubredoxin-NAD(+) reductase (385 aa).

FAD-binding positions include 8-11, 32-33, I79, E156, D275, and I293; these read AGTA and SR.

This sequence belongs to the FAD-dependent oxidoreductase family. Homodimer. The cofactor is FAD.

It is found in the cytoplasm. It catalyses the reaction 2 reduced [rubredoxin] + NAD(+) + H(+) = 2 oxidized [rubredoxin] + NADH. Its pathway is hydrocarbon metabolism; alkane degradation. In terms of biological role, involved in the hydrocarbon hydroxylating system, which transfers electrons from NADH to rubredoxin reductase and then through rubredoxin to alkane 1 monooxygenase. This chain is Rubredoxin-NAD(+) reductase (alkT), found in Ectopseudomonas oleovorans (Pseudomonas oleovorans).